A 145-amino-acid polypeptide reads, in one-letter code: Protein ImpA (145 aa).

Residues Ser64 and Lys101 each act as for autocatalytic cleavage activity in the active site.

It belongs to the peptidase S24 family.

Involved in UV protection and mutation. In Escherichia coli, this protein is Protein ImpA.